Reading from the N-terminus, the 313-residue chain is D-alanine--D-alanine ligase (313 aa).

The region spanning 108–308 (KLVWQQTGVP…YSELVVKVLS (201 aa)) is the ATP-grasp domain. Residue 138–193 (VAKLGLPLFVKPASEGSSVAVLKVKTADALPAALSEAATHDKIVIVEKSIEGGGEY) coordinates ATP. The Mg(2+) site is built by Asp-262, Glu-275, and Asn-277.

The protein belongs to the D-alanine--D-alanine ligase family. Mg(2+) is required as a cofactor. The cofactor is Mn(2+).

Its subcellular location is the cytoplasm. The enzyme catalyses 2 D-alanine + ATP = D-alanyl-D-alanine + ADP + phosphate + H(+). Its pathway is cell wall biogenesis; peptidoglycan biosynthesis. Functionally, cell wall formation. This Burkholderia ambifaria (strain MC40-6) protein is D-alanine--D-alanine ligase.